The following is a 466-amino-acid chain: Flagellum-specific ATP synthase (466 aa).

194 to 201 is a binding site for ATP; that stretch reads SSSGLGKS.

This sequence belongs to the ATPase alpha/beta chains family.

Its subcellular location is the cytoplasm. It catalyses the reaction ATP + H2O + 4 H(+)(in) = ADP + phosphate + 5 H(+)(out). Its function is as follows. Probable catalytic subunit of a protein translocase for flagellum-specific export, or a proton translocase involved in local circuits at the flagellum. May be involved in a specialized protein export pathway that proceeds without signal peptide cleavage. In Buchnera aphidicola subsp. Schizaphis graminum (strain Sg), this protein is Flagellum-specific ATP synthase (fliI).